A 106-amino-acid chain; its full sequence is Large ribosomal subunit protein bL21 (106 aa).

It belongs to the bacterial ribosomal protein bL21 family. Part of the 50S ribosomal subunit. Contacts protein L20.

This protein binds to 23S rRNA in the presence of protein L20. This Xylella fastidiosa (strain Temecula1 / ATCC 700964) protein is Large ribosomal subunit protein bL21.